Here is a 1418-residue protein sequence, read N- to C-terminus: ABC transporter G family member 38 (1418 aa).

The tract at residues 1–27 (MAHYRVSSEVENIMNRDRSHRKNEEED) is disordered. The 273-residue stretch at 147 to 419 (TKIRVLPDRK…FEFMGFKCPE (273 aa)) folds into the ABC transporter 1 domain. 179–186 (GPPGSGKS) contributes to the ATP binding site. The ABC transmembrane type-2 1 domain maps to 497-710 (ELLKACLERE…IQTAVSVNEF (214 aa)). A run of 6 helical transmembrane segments spans residues 516–536 (TFVL…VVFW), 548–568 (GIIY…SGFF), 600–620 (IITF…TYFT), 634–654 (YLVL…IAAV), 659–679 (VVSN…SGYV), and 729–749 (FFVE…STIL). In terms of domain architecture, ABC transporter 2 spans 821–1073 (MTFENITYSV…QLIEYFEGIR (253 aa)). 866–873 (GVSGAGKT) provides a ligand contact to ATP. The region spanning 1146-1360 (SQFQACLWKQ…GLYGLTIAQY (215 aa)) is the ABC transmembrane type-2 2 domain. 7 helical membrane-spanning segments follow: residues 1167 to 1187 (AVRF…FWSL), 1197 to 1217 (IFNS…QSAA), 1249 to 1269 (VIIE…IVYG), 1284 to 1304 (IFFT…VISV), 1310 to 1330 (IASI…GFTI), 1341 to 1361 (WFTY…AQYG), and 1387 to 1407 (FLWV…FIYA).

It belongs to the ABC transporter superfamily. ABCG family. PDR (TC 3.A.1.205) subfamily. As to expression, expressed in roots and siliques at low levels.

The protein resides in the membrane. In terms of biological role, may be a general defense protein. The sequence is that of ABC transporter G family member 38 (ABCG38) from Arabidopsis thaliana (Mouse-ear cress).